The following is a 113-amino-acid chain: Pro-corazonin (113 aa).

An N-terminal signal peptide occupies residues 1–19 (MATNITMFLIVITLTSVAA). Position 20 is a pyrrolidone carboxylic acid (Gln20). Asn30 is subject to Asparagine amide. Positions 74–96 (LGPCDTSKTRSTTNPSDTNTSAV) are disordered. Positions 82-96 (TRSTTNPSDTNTSAV) are enriched in polar residues.

This sequence belongs to the corazonin family. As to expression, four pairs of lateral neurosecretory cells in the brains of late instar larvae, pupae and adults.

It is found in the secreted. Cardioactive peptide. Corazonin is probably involved in the physiological regulation of the heart beat. In Galleria mellonella (Greater wax moth), this protein is Pro-corazonin.